We begin with the raw amino-acid sequence, 540 residues long: Glucose-6-phosphate isomerase (540 aa).

Catalysis depends on Glu346, which acts as the Proton donor. Active-site residues include His377 and Lys505.

This sequence belongs to the GPI family.

Its subcellular location is the cytoplasm. It carries out the reaction alpha-D-glucose 6-phosphate = beta-D-fructose 6-phosphate. Its pathway is carbohydrate biosynthesis; gluconeogenesis. The protein operates within carbohydrate degradation; glycolysis; D-glyceraldehyde 3-phosphate and glycerone phosphate from D-glucose: step 2/4. Catalyzes the reversible isomerization of glucose-6-phosphate to fructose-6-phosphate. This Francisella tularensis subsp. tularensis (strain SCHU S4 / Schu 4) protein is Glucose-6-phosphate isomerase.